Here is a 263-residue protein sequence, read N- to C-terminus: MLILLSPAKNMNFDAVGRDLLATTPDLIGETRILSKTTRQLTAPKIKAMMKINDDLARLNRERFQAFDADQPGVKQAAFAFNGEVYRGLEAHTLSAEDLDWAQSHLRILSGMYGALKPLDAIHPYRLEMGRKLHTRRGESLYDFWGDRIAKELNGLQAEAAEPVILNLASNEYFKAVDRKALKGRVITATFKEEKDGQLRALMVFAKKARGMMARWAIENRITDPADLVKFDLGGYRFEAEGSSEGDLLFTRPQPAAAGKKAA.

This sequence belongs to the UPF0246 family.

The sequence is that of UPF0246 protein Mmar10_0828 from Maricaulis maris (strain MCS10) (Caulobacter maris).